A 4731-amino-acid chain; its full sequence is Dynein axonemal heavy chain 8 (4731 aa).

Positions 1 to 145 (MESEEGNAEP…SKFRRSMTGI (145 aa)) are disordered. Over residues 9-55 (EPPPPSEEAPPPVVEEAPPPLPPEDTAPPPPEEQAPPPEGDAAPPPT) the composition is skewed to pro residues. Residues 66–75 (EAPHPEDPKL) show a composition bias toward basic and acidic residues. The span at 94 to 106 (SDEEVTLPEDEES) shows a compositional bias: acidic residues. Residues 122–133 (SVLSDGISQSSR) are compositionally biased toward polar residues. Positions 145 to 169 (IPNLQETLKEKQARFREARENRKMK) form a coiled coil. Ser-917 bears the Phosphoserine mark. Residues 1177–1201 (FQNNSRGSDQPPASGKPLKKEERSF) are disordered. Positions 1543-1567 (DVDIEKINAELQEFQNRCRKLPRAL) form a coiled coil. 4 AAA regions span residues 2049–2271 (YQNE…VLRT), 2331–2550 (SAVD…KLSL), 2657–2910 (FYPT…IWQG), and 3021–3275 (QFNE…YRRR). Residues 2087 to 2094 (GPAGTGKT) and 2369 to 2376 (GPSGSGKT) contribute to the ATP site. The interval 3290–3587 (YKSIYTDKVK…MDLLNDADMC (298 aa)) is stalk. Coiled-coil stretches lie at residues 3313 to 3405 (DKLM…ALNT), 3531 to 3583 (LKAN…LLND), and 3836 to 3871 (RVIL…DNLL). AAA regions lie at residues 3673-3903 (LVDP…EVSE) and 4118-4332 (ARKY…FIQN).

Belongs to the dynein heavy chain family. As to quaternary structure, consists of at least two heavy chains and a number of intermediate and light chains. In terms of tissue distribution, isoform 1 and/or isoform 2 are expressed in spermatocytes and mature sperm (at protein level). Testis-specific. Accumulates exclusively in mid to late spermatocytes.

It localises to the cytoplasm. The protein resides in the cytoskeleton. The protein localises to the flagellum axoneme. In terms of biological role, force generating protein component of the outer dynein arms (ODAs) in the sperm flagellum. Produces force towards the minus ends of microtubules. Dynein has ATPase activity; the force-producing power stroke is thought to occur on release of ADP. Involved in sperm motility; implicated in sperm flagellar assembly. The protein is Dynein axonemal heavy chain 8 (Dnah8) of Mus musculus (Mouse).